Consider the following 441-residue polypeptide: Double-stranded RNA-binding protein 1 (441 aa).

3 consecutive DRBM domains span residues 1–71 (MYKS…HLSS), 86–155 (SYKS…SLPQ), and 169–237 (SYKN…HFED). The interval 69 to 88 (LSSLPLPPPPPPSENQSSYK) is disordered.

Functionally, binds double-stranded RNA. The sequence is that of Double-stranded RNA-binding protein 1 (DRB1) from Oryza sativa subsp. japonica (Rice).